Reading from the N-terminus, the 389-residue chain is Glutamate 5-kinase (389 aa).

K16 provides a ligand contact to ATP. The substrate site is built by S56, D143, and N155. 175–176 lines the ATP pocket; sequence SD. A PUA domain is found at 281 to 358; it reads AGELHVDEGA…AEIEAILGYA (78 aa).

This sequence belongs to the glutamate 5-kinase family.

It is found in the cytoplasm. It catalyses the reaction L-glutamate + ATP = L-glutamyl 5-phosphate + ADP. It participates in amino-acid biosynthesis; L-proline biosynthesis; L-glutamate 5-semialdehyde from L-glutamate: step 1/2. In terms of biological role, catalyzes the transfer of a phosphate group to glutamate to form L-glutamate 5-phosphate. This is Glutamate 5-kinase from Rhizobium rhizogenes (strain K84 / ATCC BAA-868) (Agrobacterium radiobacter).